The chain runs to 643 residues: 3D-(3,5/4)-trihydroxycyclohexane-1,2-dione hydrolase (643 aa).

Residue Glu65 participates in thiamine diphosphate binding. Residues 441–521 (SLPGDLQRMW…VNVLLFDNCG (81 aa)) form a thiamine pyrophosphate binding region. Mg(2+) contacts are provided by Asp492 and Asn519.

The protein belongs to the TPP enzyme family. Mg(2+) serves as cofactor. Requires thiamine diphosphate as cofactor.

It carries out the reaction 3D-3,5/4-trihydroxycyclohexane-1,2-dione + H2O = 5-deoxy-D-glucuronate + H(+). Its pathway is polyol metabolism; myo-inositol degradation into acetyl-CoA; acetyl-CoA from myo-inositol: step 3/7. Its function is as follows. Involved in the cleavage of the C1-C2 bond of 3D-(3,5/4)-trihydroxycyclohexane-1,2-dione (THcHDO) to yield 5-deoxy-glucuronate (5DG). This chain is 3D-(3,5/4)-trihydroxycyclohexane-1,2-dione hydrolase, found in Clostridium botulinum (strain Alaska E43 / Type E3).